Reading from the N-terminus, the 344-residue chain is MSKPNVLDIRLATFEDSIVDLVINGLRKQPKTLPALLFYANEGLKHWNHHSHQPEFYPRHQEVQILKKKAQEMAASIPMNSVVVDLGSASLDKVIHLLEALEVQKKNISYYALDVSASQLESTLAAIPTQNFRHVRFAGLHGTFDDGLHWLKEAPEARDVPHTVLLFGLTIGNFSRPNAAAFLSNIGQHAFQGKSGDQCSILMSLDSCKVPTQVLRAYTCEGVVPFALQSLTYANGLFSEKNKTQASGDVQHKVFNLDEWYYLSEWNFVLGRHEASLIPRSKDIKLLPPLDGILVSKDEKVRFGCSYKYDQEERMELFAAAGVKNEVTWSDEGCDVAFYQLKLS.

Belongs to the methyltransferase superfamily. Homodimer.

It catalyses the reaction 4-(3-methylbut-2-enyl)-L-tryptophan + S-adenosyl-L-methionine = 4-(3-methylbut-2-enyl)-L-abrine + S-adenosyl-L-homocysteine + H(+). Its pathway is alkaloid biosynthesis; ergot alkaloid biosynthesis. 4-dimethylallyltryptophan N-methyltransferase; part of the gene cluster that mediates the biosynthesis of fungal ergot alkaloid ergovaline, the predominant ergopeptine product in E.festucae var. lolii. DmaW catalyzes the first step of ergot alkaloid biosynthesis by condensing dimethylallyl diphosphate (DMAP) and tryptophan to form 4-dimethylallyl-L-tryptophan. The second step is catalyzed by the methyltransferase easF that methylates 4-dimethylallyl-L-tryptophan in the presence of S-adenosyl-L-methionine, resulting in the formation of 4-dimethylallyl-L-abrine. The catalase easC and the FAD-dependent oxidoreductase easE then transform 4-dimethylallyl-L-abrine to chanoclavine-I which is further oxidized by easD in the presence of NAD(+), resulting in the formation of chanoclavine-I aldehyde. Agroclavine dehydrogenase easG then mediates the conversion of chanoclavine-I aldehyde to agroclavine via a non-enzymatic adduct reaction: the substrate is an iminium intermediate that is formed spontaneously from chanoclavine-I aldehyde in the presence of glutathione. The presence of easA is not required to complete this reaction. Further conversion of agroclavine to paspalic acid is a two-step process involving oxidation of agroclavine to elymoclavine and of elymoclavine to paspalic acid, the second step being performed by the elymoclavine oxidase cloA. Paspalic acid is then further converted to D-lysergic acid. Ergovaline is assembled from D-lysergic acid and three different amino acids by the D-lysergyl-peptide-synthetase composed of a monomudular (lpsB) and a trimodular (lpsA) nonribosomal peptide synthetase subunit. The sequence is that of 4-dimethylallyltryptophan N-methyltransferase easF from Epichloe festucae var. lolii (Neotyphodium lolii).